Here is a 446-residue protein sequence, read N- to C-terminus: MVEPAIGRNHIRAGRHHGRARIVFARTKNHAYLSHDAYCSRYPPIGRENADRLRIRTVVDRRTGRGAERWHRSPRQANGRFSNQRYSSTSPNSSPACPLIYFISIKAKRIACVVSAVIFVATSCVSPLTGFAFWETNLAYEGESIYNYLQVKNLSDRTILSTNVLFGVQSVTMKDKGLTGMYYDTALAAPALADNANSALILGMGTGTYARQLKQYYPKMNITGVEIDQKITDLAGEYFDEPADIPVTTYDGRAWLAASHDKYDVIMVDAYQDITIPFQMSSTEFFTMVREHLNPGGVMVVNMNMISDGQGSINEALSDTIASVFGNGNTLTADVPNTTNRELFAKKPGSGSEENSMQQASKALNLRETTYERTGSEDLEWYMEEVASRFRKVNEPDSASTILTDDKAPVEVLGMHAIDQIIADEAGPYRQILKDEGFGGLLRAVQ.

The unknown stretch occupies residues 1–117; the sequence is MVEPAIGRNH…KRIACVVSAV (117 aa). A disordered region spans residues 64-94; it reads GRGAERWHRSPRQANGRFSNQRYSSTSPNSS. Polar residues predominate over residues 75–94; it reads RQANGRFSNQRYSSTSPNSS. The 236-residue stretch at 116 to 351 folds into the PABS domain; that stretch reads AVIFVATSCV…ELFAKKPGSG (236 aa). Positions 118–353 are spermidine synthase; the sequence is IFVATSCVSP…FAKKPGSGSE (236 aa). Residues Asn-147, Glu-226, and 251 to 252 contribute to the S-methyl-5'-thioadenosine site; that span reads DG. Asp-269 functions as the Proton acceptor in the catalytic mechanism.

This sequence belongs to the spermidine/spermine synthase family. Homodimer or homotetramer.

It is found in the cytoplasm. The catalysed reaction is S-adenosyl 3-(methylsulfanyl)propylamine + putrescine = S-methyl-5'-thioadenosine + spermidine + H(+). Its pathway is amine and polyamine biosynthesis; spermidine biosynthesis; spermidine from putrescine: step 1/1. In terms of biological role, catalyzes the irreversible transfer of a propylamine group from the amino donor S-adenosylmethioninamine (decarboxy-AdoMet) to putrescine (1,4-diaminobutane) to yield spermidine. This chain is Probable polyamine aminopropyl transferase (speE), found in Bifidobacterium longum (strain NCC 2705).